The sequence spans 104 residues: Protein MGF 110-2L (104 aa).

The signal sequence occupies residues 1 to 31 (MRFFSYLGLLLAGLTSLQGFSTDNLLEEELR).

This sequence belongs to the asfivirus MGF 110 family.

Plays a role in virus cell tropism, and may be required for efficient virus replication in macrophages. This is Protein MGF 110-2L from African swine fever virus (isolate Pig/Portugal/OURT88/1988) (ASFV).